The primary structure comprises 30 residues: Cycloviolacin-O24 (30 aa).

The segment at residues G1–N30 is a cross-link (cyclopeptide (Gly-Asn)). 3 disulfides stabilise this stretch: C5–C19, C9–C21, and C14–C27.

Post-translationally, this is a cyclic peptide. In terms of tissue distribution, expressed in leaves but not in petals, petioles, roots and runners (at protein level).

Probably participates in a plant defense mechanism. Has hemolytic activity. The polypeptide is Cycloviolacin-O24 (Viola odorata (Sweet violet)).